We begin with the raw amino-acid sequence, 114 residues long: uncharacterized protein (114 aa).

Glycine 2 carries N-myristoyl glycine; by host lipidation. Transmembrane regions (helical) follow at residues 11–31 (FGLI…KDLL) and 44–64 (GLMW…LVAI). Positions 73–114 (VNKDSKDPKDKSIEFDDSPIRDGSSGTPDNSNEPTDLSVETS) are disordered. Residues 75-92 (KDSKDPKDKSIEFDDSPI) show a composition bias toward basic and acidic residues. The span at 96–114 (SSGTPDNSNEPTDLSVETS) shows a compositional bias: polar residues.

The protein resides in the membrane. This is an uncharacterized protein from Acanthamoeba polyphaga (Amoeba).